Reading from the N-terminus, the 279-residue chain is Fatty acid metabolism regulator protein (279 aa).

Positions 6 to 74 (KSPAGFAEKY…HGKPTKVNQF (69 aa)) constitute an HTH gntR-type domain. Residues 34–53 (ERELSELIGVTRTTLREVLQ) constitute a DNA-binding region (H-T-H motif).

As to quaternary structure, homodimer.

It localises to the cytoplasm. In terms of biological role, multifunctional regulator of fatty acid metabolism. The sequence is that of Fatty acid metabolism regulator protein from Vibrio cholerae serotype O1 (strain ATCC 39541 / Classical Ogawa 395 / O395).